The following is a 252-amino-acid chain: Thiamine thiazole synthase (252 aa).

Residues Ser35, 54-55 (EK), Gly62, Val126, and 152-154 (HVD) contribute to the NAD(+) site. 2 residues coordinate Fe cation: Asp154 and His169. Met217 provides a ligand contact to NAD(+). Residue Arg227 participates in glycine binding.

The protein belongs to the THI4 family. Homooctamer; tetramer of dimers. It depends on Fe(2+) as a cofactor.

The enzyme catalyses hydrogen sulfide + glycine + NAD(+) = ADP-5-ethyl-4-methylthiazole-2-carboxylate + nicotinamide + 3 H2O + H(+). It functions in the pathway cofactor biosynthesis; thiamine diphosphate biosynthesis. Involved in the biosynthesis of the thiazole moiety of thiamine. Catalyzes the conversion of NAD and glycine to adenosine diphosphate 5-(2-hydroxyethyl)-4-methylthiazole-2-carboxylate (ADT), an adenylated thiazole intermediate, using free sulfide as a source of sulfur. In Pyrococcus abyssi (strain GE5 / Orsay), this protein is Thiamine thiazole synthase.